Consider the following 317-residue polypeptide: Dehydrogenase/reductase SDR family member 12 (317 aa).

Positions 50 and 52 each coordinate NAD(+). Residue Ser175 coordinates substrate. Residues Tyr201, Lys205, and Thr234 each coordinate NAD(+). Residue Tyr201 is the Proton acceptor of the active site.

Belongs to the short-chain dehydrogenases/reductases (SDR) family.

Its function is as follows. Putative oxidoreductase. In Homo sapiens (Human), this protein is Dehydrogenase/reductase SDR family member 12.